The sequence spans 680 residues: Methionine--tRNA ligase (680 aa).

The short motif at 15–25 (PYANGSIHLGH) is the 'HIGH' region element. Zn(2+) contacts are provided by Cys146, Cys149, Cys159, and Cys162. The 'KMSKS' region signature appears at 332–336 (KMSKS). Lys335 contributes to the ATP binding site. The tRNA-binding domain maps to 579–680 (DFAKVDMRIA…EGAQPGMRVM (102 aa)).

Belongs to the class-I aminoacyl-tRNA synthetase family. MetG type 1 subfamily. In terms of assembly, homodimer. Zn(2+) is required as a cofactor.

It localises to the cytoplasm. It carries out the reaction tRNA(Met) + L-methionine + ATP = L-methionyl-tRNA(Met) + AMP + diphosphate. Functionally, is required not only for elongation of protein synthesis but also for the initiation of all mRNA translation through initiator tRNA(fMet) aminoacylation. The polypeptide is Methionine--tRNA ligase (Photobacterium profundum (strain SS9)).